Consider the following 193-residue polypeptide: Gas vesicle protein C (193 aa).

Repeats lie at residues 19–51 (VAEL…LQAF), 52–84 (YKDL…LLAF), 85–117 (HKEL…LLAF), 118–150 (YQEV…LLAF), and 151–183 (HKEL…LLKF). A 5 X 33 AA tandem repeats region spans residues 19–183 (VAELSLETRE…KEQKESLLKF (165 aa)).

The protein belongs to the gas vesicle GvpC family.

Its subcellular location is the gas vesicle. Its function is as follows. Confers stability, involved in shaping gas vesicles (GV), hollow, gas-filled proteinaceous nanostructures. During planktonic growth they allow positioning of the organism at a favorable depth for light or nutrient acquisition. The ratio of GvpA:GvpC is estimated to be 25:1. GvpC strengthens the GV wall, probably by connecting several GvpA proteins in the same and/or adjacent ribs. Removal of GvpC by SDS reduces the critical collapse pressure (CCP) of stored gas vesicles from 0.23 Mpa to 0.08 MPa. Removal of GvpC by urea reduces CCP of freshly isolated GVs from 0.550 MPa to 0.190 MPa; addition of recombinant GvpC restores CCP to 0.508 MPa. As the turgor pressure in this species is usually 0.35 MPa (plus the water column pressure in its growth environment), this protein is essential for GV formation. In Dolichospermum flosaquae (Anabaena flos-aquae), this protein is Gas vesicle protein C.